The sequence spans 221 residues: Glutathione S-transferase A3 (221 aa).

The residue at position 2 (Ala-2) is an N-acetylalanine. In terms of domain architecture, GST N-terminal spans 3 to 83 (GKPVLHYFDG…YIASKYNLYG (81 aa)). At Lys-4 the chain carries N6-succinyllysine. Residues Tyr-9, Arg-45, 54-55 (QV), and 67-68 (QT) contribute to the glutathione site. A GST C-terminal domain is found at 85–207 (DMKERAIIDM…LQPGSQRKPF (123 aa)).

Homodimer.

The protein localises to the cytoplasm. It carries out the reaction RX + glutathione = an S-substituted glutathione + a halide anion + H(+). The catalysed reaction is androst-5-ene-3,17-dione = androst-4-ene-3,17-dione. The enzyme catalyses pregn-5-ene-3,20-dione = progesterone. In terms of biological role, conjugation of reduced glutathione to a wide number of exogenous and endogenous hydrophobic electrophiles. Catalyzes isomerization reactions that contribute to the biosynthesis of steroid hormones. Efficiently catalyze obligatory double-bond isomerizations of delta(5)-androstene-3,17-dione and delta(5)-pregnene-3,20-dione, precursors to testosterone and progesterone, respectively. Has a high catalytic activity for aflatoxin B1-8,9 epoxide. The sequence is that of Glutathione S-transferase A3 from Mus musculus (Mouse).